The sequence spans 186 residues: Ribosome-recycling factor (186 aa).

The protein belongs to the RRF family.

The protein localises to the cytoplasm. In terms of biological role, responsible for the release of ribosomes from messenger RNA at the termination of protein biosynthesis. May increase the efficiency of translation by recycling ribosomes from one round of translation to another. This Allorhizobium ampelinum (strain ATCC BAA-846 / DSM 112012 / S4) (Agrobacterium vitis (strain S4)) protein is Ribosome-recycling factor.